The following is a 245-amino-acid chain: MLYIFRLIVTVIYSILVCVFGSIYCLFSPRNPKHVATFGHMFGRLAPLFGLKVECRKPADAENYGNAIYIANHQNNYDMVTAANIVQPPTVTVGKKSLLWIPFFGQLYWLTGNLLIDRNNRAKAHSTIAAVVNHFKKRRISIWMFPEGTRSRGRGLLPFKTGAFHAAIAAGVPIIPVCVSNTSNKVNLNRLNNGLVIVEMLPPVDVSEYGKDQVRELAAHCRALMEQKIAELDKEVAEREATGKV.

The short motif at 73–78 (HQNNYD) is the HXXXXD motif element.

Belongs to the 1-acyl-sn-glycerol-3-phosphate acyltransferase family.

Its subcellular location is the cell inner membrane. It catalyses the reaction a 1-acyl-sn-glycero-3-phosphate + an acyl-CoA = a 1,2-diacyl-sn-glycero-3-phosphate + CoA. Its pathway is phospholipid metabolism; CDP-diacylglycerol biosynthesis; CDP-diacylglycerol from sn-glycerol 3-phosphate: step 2/3. Converts lysophosphatidic acid (LPA) into phosphatidic acid by incorporating an acyl moiety at the 2 position. This enzyme can utilize either acyl-CoA or acyl-acyl-carrier-protein as the fatty acyl donor. In Salmonella typhi, this protein is 1-acyl-sn-glycerol-3-phosphate acyltransferase (plsC).